The following is an 873-amino-acid chain: Leucine--tRNA ligase (873 aa).

Residues 48–58 (PYPSGKLHMGH) carry the 'HIGH' region motif. A 'KMSKS' region motif is present at residues 636–640 (KMSKS). K639 contacts ATP.

Belongs to the class-I aminoacyl-tRNA synthetase family.

The protein localises to the cytoplasm. The catalysed reaction is tRNA(Leu) + L-leucine + ATP = L-leucyl-tRNA(Leu) + AMP + diphosphate. This is Leucine--tRNA ligase from Cupriavidus metallidurans (strain ATCC 43123 / DSM 2839 / NBRC 102507 / CH34) (Ralstonia metallidurans).